The sequence spans 634 residues: Ras and EF-hand domain-containing protein homolog (634 aa).

EF-hand domains lie at glutamate 5–leucine 33 and leucine 33–histidine 68. Ca(2+) is bound by residues aspartate 46, aspartate 48, serine 50, lysine 52, and glutamate 57. Positions leucine 169–glutamate 310 form a coiled coil. Positions alanine 212 to glutamate 234 are disordered. Residues alanine 449–serine 454, asparagine 552–aspartate 555, and alanine 585–leucine 586 each bind GTP. The propeptide at arginine 632–serine 634 is removed in mature form.

It belongs to the small GTPase superfamily. Rab family. As to quaternary structure, homodimer.

It is found in the cytoplasm. The protein resides in the perinuclear region. Functionally, binds GTP and GDP. Plays a role in uterine seam cell development. This Caenorhabditis elegans protein is Ras and EF-hand domain-containing protein homolog.